The primary structure comprises 336 residues: uncharacterized protein (336 aa).

In terms of domain architecture, ATP-grasp spans K123–D323.

The protein belongs to the D-alanine--D-alanine ligase family.

Its function is as follows. Could be involved in the biosynthesis of a cell wall component. This is an uncharacterized protein from Sinorhizobium fredii (strain NBRC 101917 / NGR234).